A 174-amino-acid chain; its full sequence is Small ribosomal subunit protein uS5 (174 aa).

Positions 19-82 constitute an S5 DRBM domain; it reads LREKMIAINR…EEARRNMTKI (64 aa).

It belongs to the universal ribosomal protein uS5 family. In terms of assembly, part of the 30S ribosomal subunit. Contacts proteins S4 and S8.

In terms of biological role, with S4 and S12 plays an important role in translational accuracy. Located at the back of the 30S subunit body where it stabilizes the conformation of the head with respect to the body. This chain is Small ribosomal subunit protein uS5, found in Albidiferax ferrireducens (strain ATCC BAA-621 / DSM 15236 / T118) (Rhodoferax ferrireducens).